Here is a 565-residue protein sequence, read N- to C-terminus: Arginine--tRNA ligase (565 aa).

Residues 126–136 carry the 'HIGH' region motif; that stretch reads ANPTGPLHIGH.

The protein belongs to the class-I aminoacyl-tRNA synthetase family. As to quaternary structure, monomer.

It localises to the cytoplasm. It carries out the reaction tRNA(Arg) + L-arginine + ATP = L-arginyl-tRNA(Arg) + AMP + diphosphate. The chain is Arginine--tRNA ligase from Wolbachia sp. subsp. Brugia malayi (strain TRS).